Reading from the N-terminus, the 732-residue chain is Engulfment and cell motility protein 2 (732 aa).

Y48 is modified (phosphotyrosine). One can recognise an ELMO domain in the interval 323–497; that stretch reads AQRDIIFELR…VVREQITRAL (175 aa). S515 carries the phosphoserine modification. One can recognise a PH domain in the interval 565-686; the sequence is SSFRKIGNRR…LLGKDMSSEL (122 aa). The short motif at 712–719 is the SH3-binding element; the sequence is PEAPPPVP. Residue Y729 is modified to Phosphotyrosine.

In terms of assembly, interacts directly with the SH3-domain of DOCK1 via its SH3-binding site. Probably forms a heterotrimeric complex with DOCK1 and RAC1. Interacts with ARHGEF16, DOCK4 and EPHA2; mediates activation of RAC1 by EPHA2. Interacts with ADGRB3. Interacts with AUTS2; the interaction is direct.

The protein localises to the cytoplasm. Its subcellular location is the cytosol. The protein resides in the membrane. Its function is as follows. Involved in cytoskeletal rearrangements required for phagocytosis of apoptotic cells and cell motility. Acts in association with DOCK1 and CRK. Was initially proposed to be required in complex with DOCK1 to activate Rac Rho small GTPases. May enhance the guanine nucleotide exchange factor (GEF) activity of DOCK1. This is Engulfment and cell motility protein 2 (Elmo2) from Mus musculus (Mouse).